The sequence spans 411 residues: BRO1 domain-containing protein BROX (411 aa).

The region spanning 90–408 (FKWTDTLQGQ…DIKPQKDTGC (319 aa)) is the BRO1 domain. Position 283 is an N6-acetyllysine (Lys-283). The disordered stretch occupies residues 372-411 (AFDLTKRPKDDSTKPKPEEEVKPVKEPDIKPQKDTGCYIS). The segment covering 375-404 (LTKRPKDDSTKPKPEEEVKPVKEPDIKPQK) has biased composition (basic and acidic residues). Cys-408 is modified (cysteine methyl ester). Cys-408 carries the S-farnesyl cysteine lipid modification. The propeptide at 409 to 411 (YIS) is removed in mature form.

The protein belongs to the BROX family. As to quaternary structure, monomer. Interacts with CHMP4B. Interacts with CHMP5: this interaction allows the recruitment of BROX to cellular membranes. Interacts with SYN2; this interaction promotes SYN2 ubiquitination and facilitates the relaxation of mechanical stress imposed by compressive actin fibers at the rupture site. In terms of processing, farnesylation is required for nuclear envelope localization.

It is found in the nucleus membrane. Nuclear envelope-associated factor that is involved in the nuclear envelope ruptures during interphase (NERDI) repair, where it is locally recruited by CHMP5 and reduces cytoskeletal stress through its action on SYN2 to help reseal the ruptured membrane. This chain is BRO1 domain-containing protein BROX, found in Homo sapiens (Human).